Consider the following 574-residue polypeptide: Pyruvate kinase PKLR (574 aa).

A phosphoserine mark is found at serine 2, serine 19, serine 26, and serine 43. Arginine 116 is a binding site for substrate. Positions 118, 120, 156, and 157 each coordinate K(+). 118–121 (NFSH) is a binding site for ATP. ATP contacts are provided by arginine 163 and lysine 250. Residue serine 292 is modified to Phosphoserine. Lysine 313 contributes to the substrate binding site. Glutamate 315 serves as a coordination point for Mn(2+). Substrate-binding residues include glycine 338, aspartate 339, and threonine 371. Aspartate 339 contributes to the Mn(2+) binding site. Beta-D-fructose 1,6-bisphosphate is bound by residues 475-480 (TTTGRS), tryptophan 525, arginine 532, and 559-564 (RPGSGY).

Belongs to the pyruvate kinase family. In terms of assembly, homotetramer. Mg(2+) is required as a cofactor. It depends on Mn(2+) as a cofactor. Requires K(+) as cofactor.

It catalyses the reaction pyruvate + ATP = phosphoenolpyruvate + ADP + H(+). It participates in carbohydrate degradation; glycolysis; pyruvate from D-glyceraldehyde 3-phosphate: step 5/5. With respect to regulation, allosterically activated by fructose 1,6-bisphosphate. Functionally, pyruvate kinase that catalyzes the conversion of phosphoenolpyruvate to pyruvate with the synthesis of ATP, and which plays a key role in glycolysis. The chain is Pyruvate kinase PKLR (PKLR) from Homo sapiens (Human).